A 39-amino-acid polypeptide reads, in one-letter code: Photosystem II reaction center protein J (39 aa).

Residues 9–29 (LWLVGLVGGLAVITMLGLFIY) form a helical membrane-spanning segment.

The protein belongs to the PsbJ family. PSII is composed of 1 copy each of membrane proteins PsbA, PsbB, PsbC, PsbD, PsbE, PsbF, PsbH, PsbI, PsbJ, PsbK, PsbL, PsbM, PsbT, PsbX, PsbY, PsbZ, Psb30/Ycf12, at least 3 peripheral proteins of the oxygen-evolving complex and a large number of cofactors. It forms dimeric complexes.

It localises to the plastid. The protein localises to the chloroplast thylakoid membrane. Its function is as follows. One of the components of the core complex of photosystem II (PSII). PSII is a light-driven water:plastoquinone oxidoreductase that uses light energy to abstract electrons from H(2)O, generating O(2) and a proton gradient subsequently used for ATP formation. It consists of a core antenna complex that captures photons, and an electron transfer chain that converts photonic excitation into a charge separation. The polypeptide is Photosystem II reaction center protein J (Phaeodactylum tricornutum (strain CCAP 1055/1)).